The following is a 40-amino-acid chain: Cytochrome c3 hydrogenase small chain (40 aa).

The cofactor is Fe cation.

The enzyme catalyses 2 Fe(III)-[cytochrome c3] + H2 = 2 Fe(II)-[cytochrome c3] + 2 H(+). The chain is Cytochrome c3 hydrogenase small chain (hoxK) from Acidithiobacillus ferrooxidans (Thiobacillus ferrooxidans).